Consider the following 584-residue polypeptide: Proteasome-associated ATPase (584 aa).

The stretch at 8-90 (RHAERDRDEL…KEEVDRLSQP (83 aa)) forms a coiled coil. ATP is bound at residue 272–277 (GCGKTL). Residues 583–584 (YL) are docks into pockets in the proteasome alpha-ring.

The protein belongs to the AAA ATPase family. Homohexamer. Assembles into a hexameric ring structure that caps the 20S proteasome core. Strongly interacts with the prokaryotic ubiquitin-like protein Pup through a hydrophobic interface; the interacting region of ARC lies in its N-terminal coiled-coil domain. There is one Pup binding site per ARC hexamer ring. Upon ATP-binding, the C-terminus of ARC interacts with the alpha-rings of the proteasome core, possibly by binding to the intersubunit pockets.

It participates in protein degradation; proteasomal Pup-dependent pathway. In terms of biological role, ATPase which is responsible for recognizing, binding, unfolding and translocation of pupylated proteins into the bacterial 20S proteasome core particle. May be essential for opening the gate of the 20S proteasome via an interaction with its C-terminus, thereby allowing substrate entry and access to the site of proteolysis. Thus, the C-termini of the proteasomal ATPase may function like a 'key in a lock' to induce gate opening and therefore regulate proteolysis. The protein is Proteasome-associated ATPase of Thermobifida fusca (strain YX).